A 215-amino-acid chain; its full sequence is Probable transaldolase (215 aa).

The active-site Schiff-base intermediate with substrate is the K83.

Belongs to the transaldolase family. Type 3B subfamily.

The protein resides in the cytoplasm. It catalyses the reaction D-sedoheptulose 7-phosphate + D-glyceraldehyde 3-phosphate = D-erythrose 4-phosphate + beta-D-fructose 6-phosphate. It functions in the pathway carbohydrate degradation; pentose phosphate pathway; D-glyceraldehyde 3-phosphate and beta-D-fructose 6-phosphate from D-ribose 5-phosphate and D-xylulose 5-phosphate (non-oxidative stage): step 2/3. Functionally, transaldolase is important for the balance of metabolites in the pentose-phosphate pathway. This chain is Probable transaldolase, found in Heliobacterium modesticaldum (strain ATCC 51547 / Ice1).